The following is a 194-amino-acid chain: Phosphoheptose isomerase (194 aa).

An SIS domain is found at 37 to 194 (ISNSFKQGGK…LIEFEMAKQA (158 aa)). 52–54 (NGG) contributes to the substrate binding site. Zn(2+) contacts are provided by His-61 and Glu-65. Residues Glu-65, 93–94 (ND), 119–121 (STS), Ser-124, and Gln-172 each bind substrate. The Zn(2+) site is built by Gln-172 and His-180.

It belongs to the SIS family. GmhA subfamily. In terms of assembly, homotetramer. Zn(2+) serves as cofactor.

It localises to the cytoplasm. It carries out the reaction 2 D-sedoheptulose 7-phosphate = D-glycero-alpha-D-manno-heptose 7-phosphate + D-glycero-beta-D-manno-heptose 7-phosphate. It functions in the pathway carbohydrate biosynthesis; D-glycero-D-manno-heptose 7-phosphate biosynthesis; D-glycero-alpha-D-manno-heptose 7-phosphate and D-glycero-beta-D-manno-heptose 7-phosphate from sedoheptulose 7-phosphate: step 1/1. Its function is as follows. Catalyzes the isomerization of sedoheptulose 7-phosphate in D-glycero-D-manno-heptose 7-phosphate. This Haemophilus influenzae (strain 86-028NP) protein is Phosphoheptose isomerase.